A 124-amino-acid chain; its full sequence is Desulfoferrodoxin homolog (124 aa).

9 residues coordinate Fe cation: Cys10, Cys13, Cys29, Cys30, His49, His69, His75, Cys117, and His120.

Belongs to the desulfoferrodoxin family. Requires Fe(3+) as cofactor. Cu(2+) serves as cofactor.

The sequence is that of Desulfoferrodoxin homolog from Methanothermobacter thermautotrophicus (strain ATCC 29096 / DSM 1053 / JCM 10044 / NBRC 100330 / Delta H) (Methanobacterium thermoautotrophicum).